The primary structure comprises 526 residues: Anthranilate synthase component 1 (526 aa).

Residues Ser40 and Pro304 to Met306 contribute to the L-tryptophan site. Gly341–Thr342 contributes to the chorismate binding site. Residue Glu374 coordinates Mg(2+). Residues Tyr461, Arg481, Gly495 to Gly497, and Gly497 each bind chorismate. A Mg(2+)-binding site is contributed by Glu510.

The protein belongs to the anthranilate synthase component I family. Heterotetramer consisting of two non-identical subunits: a beta subunit (TrpG) and a large alpha subunit (TrpE). Mg(2+) is required as a cofactor.

It carries out the reaction chorismate + L-glutamine = anthranilate + pyruvate + L-glutamate + H(+). The protein operates within amino-acid biosynthesis; L-tryptophan biosynthesis; L-tryptophan from chorismate: step 1/5. With respect to regulation, feedback inhibited by tryptophan. Its function is as follows. Part of a heterotetrameric complex that catalyzes the two-step biosynthesis of anthranilate, an intermediate in the biosynthesis of L-tryptophan. In the first step, the glutamine-binding beta subunit (TrpG) of anthranilate synthase (AS) provides the glutamine amidotransferase activity which generates ammonia as a substrate that, along with chorismate, is used in the second step, catalyzed by the large alpha subunit of AS (TrpE) to produce anthranilate. In the absence of TrpG, TrpE can synthesize anthranilate directly from chorismate and high concentrations of ammonia. In Buchnera aphidicola subsp. Tetraneura caerulescens, this protein is Anthranilate synthase component 1 (trpE).